The primary structure comprises 542 residues: Peptide chain release factor 3 (542 aa).

One can recognise a tr-type G domain in the interval 11–279 (EKRRTFAIIS…AYVEYAPSPR (269 aa)). GTP contacts are provided by residues 20–27 (SHPDAGKT), 88–92 (DTPGH), and 142–145 (NKLD).

Belongs to the TRAFAC class translation factor GTPase superfamily. Classic translation factor GTPase family. PrfC subfamily.

It localises to the cytoplasm. Its function is as follows. Increases the formation of ribosomal termination complexes and stimulates activities of RF-1 and RF-2. It binds guanine nucleotides and has strong preference for UGA stop codons. It may interact directly with the ribosome. The stimulation of RF-1 and RF-2 is significantly reduced by GTP and GDP, but not by GMP. This Nitrosococcus oceani (strain ATCC 19707 / BCRC 17464 / JCM 30415 / NCIMB 11848 / C-107) protein is Peptide chain release factor 3.